We begin with the raw amino-acid sequence, 320 residues long: ATPase H(+)-transporting accessory protein 2 (320 aa).

Positions 1–17 (MLRVFVIFSLFIAAINA) are cleaved as a signal peptide. Over 18-277 (SGEFTVLNRP…YGSDYPVIFN (260 aa)) the chain is Lumenal. Residues 278–298 (IILWFMVVFGLSLLAICYAIA) traverse the membrane as a helical segment. Topologically, residues 299–320 (AMDPGRDSIIYRMTSTRIKKDN) are cytoplasmic. The short motif at 317 to 320 (KKDN) is the Mediates retrograde transport to the ER element.

As to quaternary structure, interacts with fz and fz2. Interacts (via N-terminus) with stan. As an accessory component of the multisubunit proton-transporting vacuolar (V)-ATPase protein pump, might interacts with VhaAC45. Proteolytically cleaved by a furin-like convertase in the trans-Golgi network to generate N- and C-terminal fragments. Cleavage is reduced in the fat body.

The protein localises to the cell membrane. Its subcellular location is the endoplasmic reticulum membrane. The protein resides in the vesicle. It is found in the apical cell membrane. It localises to the golgi apparatus membrane. The protein localises to the secreted. Its function is as follows. Multifunctional protein which functions as a transmembrane receptor in the planar cell polarity (PCP) and is involved in the assembly of the proton-transporting vacuolar (V)-ATPase protein pump. As transmembrane receptor mediates fz/PCP signaling through interaction with fz and stabilizes asymmetric PCP domains through its interaction with stan. Also mediates Wnt/beta-cat signaling through interaction with fz/fz2. Probably by controlling the assembly of the V-ATPase pump and thus the acidification of the endo-lysosomal system, plays a role in many neuronal processes including synapse morphology and synaptic transmission. Functionally, stabilizes asymmetric Planar Cell Polarity (PCP) domains through its interaction with stan. The protein is ATPase H(+)-transporting accessory protein 2 of Drosophila melanogaster (Fruit fly).